We begin with the raw amino-acid sequence, 551 residues long: Glucose-6-phosphate isomerase (551 aa).

Residue Glu-349 is the Proton donor of the active site. Active-site residues include His-378 and Lys-480.

This sequence belongs to the GPI family.

The protein localises to the cytoplasm. It carries out the reaction alpha-D-glucose 6-phosphate = beta-D-fructose 6-phosphate. The protein operates within carbohydrate biosynthesis; gluconeogenesis. It participates in carbohydrate degradation; glycolysis; D-glyceraldehyde 3-phosphate and glycerone phosphate from D-glucose: step 2/4. Functionally, catalyzes the reversible isomerization of glucose-6-phosphate to fructose-6-phosphate. The protein is Glucose-6-phosphate isomerase of Prochlorococcus marinus (strain MIT 9313).